We begin with the raw amino-acid sequence, 292 residues long: Phosphoribosylglycinamide formyltransferase, chloroplastic (292 aa).

The transit peptide at 1 to 65 directs the protein to the chloroplast; it reads MESRVLFSSQ…KAASSTPQIV (65 aa). 88 to 90 provides a ligand contact to N(1)-(5-phospho-beta-D-ribosyl)glycinamide; that stretch reads GSN. Residues 167-170 and Asn184 contribute to the (6R)-10-formyltetrahydrofolate site; that span reads LKLI. The active-site Proton donor is the His186. Position 227 (Asp227) interacts with (6R)-10-formyltetrahydrofolate. A N(1)-(5-phospho-beta-D-ribosyl)glycinamide-binding site is contributed by Glu256.

The protein belongs to the GART family.

The protein resides in the plastid. Its subcellular location is the chloroplast. It catalyses the reaction N(1)-(5-phospho-beta-D-ribosyl)glycinamide + (6R)-10-formyltetrahydrofolate = N(2)-formyl-N(1)-(5-phospho-beta-D-ribosyl)glycinamide + (6S)-5,6,7,8-tetrahydrofolate + H(+). It participates in purine metabolism; IMP biosynthesis via de novo pathway; N(2)-formyl-N(1)-(5-phospho-D-ribosyl)glycinamide from N(1)-(5-phospho-D-ribosyl)glycinamide (10-formyl THF route): step 1/1. In Arabidopsis thaliana (Mouse-ear cress), this protein is Phosphoribosylglycinamide formyltransferase, chloroplastic (PUR3).